Consider the following 154-residue polypeptide: Ferredoxin C 1, chloroplastic (154 aa).

Residues 1–56 (MATLPLPTQTSTISLPKPYLSNSFSFPLRNATLSTTTNRRNFLTTGRIIARAYKVV) constitute a chloroplast transit peptide. The 2Fe-2S ferredoxin-type domain maps to 57–142 (VEHDGKTTEL…DCHIKMIPEE (86 aa)). [2Fe-2S] cluster is bound by residues Cys89, Cys94, Cys97, and Cys126.

It belongs to the 2Fe2S plant-type ferredoxin family. The cofactor is [2Fe-2S] cluster.

It localises to the plastid. The protein localises to the chloroplast. In terms of biological role, ferredoxins are iron-sulfur proteins that transfer electrons in a wide variety of metabolic reactions. Mediates alternative electron partitioning in conditions of acceptor limitation at photosystem I. Accepts electrons from photosystem I (PSI) and is capable of electron transfer with FNR, but cannot support photoreduction of NADP(+). The sequence is that of Ferredoxin C 1, chloroplastic from Arabidopsis thaliana (Mouse-ear cress).